A 263-amino-acid polypeptide reads, in one-letter code: Meiotic drive suppressor wtf6 (263 aa).

The tract at residues 1–68 is disordered; sequence MKNNYTSLKS…REKNPSRSTD (68 aa). The span at 19–30 shows a compositional bias: basic and acidic residues; the sequence is KTDHEIDLEKGP. 3 helical membrane-spanning segments follow: residues 73–93, 110–130, and 201–221; these read FLIK…PAVC, WTLF…LTYF, and SASA…AETV.

This sequence belongs to the WTF family. Homomer. Interacts with other proteins that exhibit high sequence similarity.

It localises to the spore membrane. The protein localises to the vacuole membrane. In terms of biological role, acts as a suppressor component of the dual wtf meiotic drive system, and can suppress but not confer meiotic drive by compatible poisons. Wtf meiotic drive systems promote unequal transmission of alleles from the parental zygote to progeny spores by encoding a poison and an antidote from the same locus; the poison is trans-acting and forms toxic aggregates in all spores within an ascus, wherease the antidote is spore-specific and targets aggregates for degradation by the vacuole. Meiotic drive by wtf systems therefore lead to poisoning of all progeny that do not inherit the dual poison/antidote allele, or express a compatible antidote. The chain is Meiotic drive suppressor wtf6 from Schizosaccharomyces kambucha (Fission yeast).